We begin with the raw amino-acid sequence, 189 residues long: MAPAWSFLLALLLLSCNAICSLGCHLPHTHSLPNRRVLTLLRQLRRVSPSSCLQDRNDFAFPQEALGGSQLQKAQAISVLHEVTQHTFQLFSTEGSATTWDESLLDKLHAALDQQLTDLQACLRQEEGLRGAPLLKEGSSLAVRKYFHRLTLYLQEKRHSPCAWEVVRAEVMRAFSSSTNLQEKFRRKD.

Positions 1-23 (MAPAWSFLLALLLLSCNAICSLG) are cleaved as a signal peptide. 2 cysteine pairs are disulfide-bonded: Cys24–Cys122 and Cys52–Cys162.

The protein belongs to the alpha/beta interferon family.

The protein localises to the secreted. Functionally, produced by macrophages, IFN-alpha have antiviral activities. Interferon stimulates the production of two enzymes: a protein kinase and an oligoadenylate synthetase. The protein is Interferon alpha-B (IFNAB) of Bos taurus (Bovine).